The sequence spans 381 residues: Succinyl-diaminopimelate desuccinylase (381 aa).

Zn(2+) is bound at residue H71. D73 is a catalytic residue. D104 serves as a coordination point for Zn(2+). E136 serves as the catalytic Proton acceptor. Positions 137, 166, and 351 each coordinate Zn(2+).

This sequence belongs to the peptidase M20A family. DapE subfamily. Homodimer. Zn(2+) is required as a cofactor. Requires Co(2+) as cofactor.

It carries out the reaction N-succinyl-(2S,6S)-2,6-diaminopimelate + H2O = (2S,6S)-2,6-diaminopimelate + succinate. It participates in amino-acid biosynthesis; L-lysine biosynthesis via DAP pathway; LL-2,6-diaminopimelate from (S)-tetrahydrodipicolinate (succinylase route): step 3/3. Catalyzes the hydrolysis of N-succinyl-L,L-diaminopimelic acid (SDAP), forming succinate and LL-2,6-diaminopimelate (DAP), an intermediate involved in the bacterial biosynthesis of lysine and meso-diaminopimelic acid, an essential component of bacterial cell walls. The polypeptide is Succinyl-diaminopimelate desuccinylase (Ehrlichia chaffeensis (strain ATCC CRL-10679 / Arkansas)).